The sequence spans 312 residues: 4-hydroxyphenylacetate decarboxylase activating enzyme (312 aa).

Residues 16-299 (HDGPGCRTSV…MEHLQQLYLD (284 aa)) enclose the Radical SAM core domain. Residues C30, C34, C37, C56, C62, C65, and C101 each coordinate [4Fe-4S] cluster. 36 to 38 (WCA) is an S-adenosyl-L-methionine binding site. 4Fe-4S ferredoxin-type domains are found at residues 47–79 (KHIM…FSED) and 80–112 (GKLK…CVKE). S-adenosyl-L-methionine is bound by residues G140, 189–191 (DVK), and H263.

Belongs to the organic radical-activating enzymes family. Monomer. [4Fe-4S] cluster serves as cofactor.

It catalyses the reaction glycyl-[protein] + reduced [flavodoxin] + S-adenosyl-L-methionine = glycin-2-yl radical-[protein] + semiquinone [flavodoxin] + 5'-deoxyadenosine + L-methionine + H(+). Functionally, catalyzes activation of 4-hydroxyphenylacetate decarboxylase under anaerobic conditions by generation of an organic free radical on a glycine residue, via a homolytic cleavage of S-adenosyl-L-methionine (SAM). The polypeptide is 4-hydroxyphenylacetate decarboxylase activating enzyme (Clostridium scatologenes).